Consider the following 426-residue polypeptide: MSIVEDARKGIITEEMKVVAAQEGVTEDFIRRGIASGQIVIPVSPYRKVKLCGIGGGLRTKVNCSVGTSTDIVDVDMEVEKVKAGERAGADTIMELSTGGDFVEIRRRCIEATTLSVGSVPLYQAFIEAARKDGAVIHMREDDLFRITEEQAKLGTNFMAIHTGVNRITLERLQRQGRHGGLCSRGGAFLTAWMLHNDKENPLYAEFDYLCEILKEHEVTLSTGNGMRAGAVHDATDRAQIQELIINAELGDRAHEMGIQVIVEGPGHVPLDQIETNVRLMKRMSGNKPFYMLGPIVTDIAPGYDDRVSAIGAAMSSMHGADFICYVTPAEHLALPNPEEVYEGVISSRIAAHVGDMIKLNKRDQDLAMGHARRDLDWEAQFNLAINPARARQIRNERASADADACTMCGDYCALKIANKVIKKLD.

Residues M94, Y123, H162, 184 to 186 (SRG), 225 to 228 (NGMR), and E264 contribute to the substrate site. H268 contacts Zn(2+). Y291 is a binding site for substrate. Position 332 (H332) interacts with Zn(2+). C406, C409, and C413 together coordinate [4Fe-4S] cluster.

Belongs to the ThiC family. Requires [4Fe-4S] cluster as cofactor.

It carries out the reaction 5-amino-1-(5-phospho-beta-D-ribosyl)imidazole + S-adenosyl-L-methionine = 4-amino-2-methyl-5-(phosphooxymethyl)pyrimidine + CO + 5'-deoxyadenosine + formate + L-methionine + 3 H(+). It participates in cofactor biosynthesis; thiamine diphosphate biosynthesis. In terms of biological role, catalyzes the synthesis of the hydroxymethylpyrimidine phosphate (HMP-P) moiety of thiamine from aminoimidazole ribotide (AIR) in a radical S-adenosyl-L-methionine (SAM)-dependent reaction. This Methanospirillum hungatei JF-1 (strain ATCC 27890 / DSM 864 / NBRC 100397 / JF-1) protein is Phosphomethylpyrimidine synthase.